The primary structure comprises 184 residues: Large ribosomal subunit protein uL15 (184 aa).

The tract at residues 1–45 (MDLSSLRPAKGAVKNKKRVGRGQGSGNGTTAGKGNNGQQSRSGYK) is disordered. The span at 21 to 35 (RGQGSGNGTTAGKGN) shows a compositional bias: gly residues.

The protein belongs to the universal ribosomal protein uL15 family. As to quaternary structure, part of the 50S ribosomal subunit.

Its function is as follows. Binds to the 23S rRNA. The sequence is that of Large ribosomal subunit protein uL15 from Pelodictyon phaeoclathratiforme (strain DSM 5477 / BU-1).